The chain runs to 395 residues: NAC domain-containing protein 7 (395 aa).

An NAC domain is found at 7 to 156 (VPPGFRFHPT…GWVVCRVFKK (150 aa)). The DNA-binding element occupies 107–162 (IGMRKTLVFYKGRAPNGQKSDWIMHEYRLETDENGTPQEEGWVVCRVFKKRLAAVR). Polar residues-rich tracts occupy residues 344-362 (AATA…SNAE) and 382-395 (TAST…DLWK). The tract at residues 344–395 (AATASASIQNNAKDTSNAEYQVDEEKDPKRASDMGEEYTASTSSSCQIDLWK) is disordered.

It belongs to the plant vascular related NAC-domain protein family. As to quaternary structure, interacts with NAC083/VNI2. In terms of tissue distribution, expressed in root, shoot and hypocotyl vascular elements, columella root caps, epidermal and cortex root cells and root-hypocotyl junctions. Observed predominantly in root imature xylem vessels. Present in root developing xylems. Specifically expressed in vessels in the secondary xylem of the root-hypocotyl region, and in vessels but not in interfascicular fibers in stems.

The protein resides in the nucleus. Transcription activator that binds to the secondary wall NAC binding element (SNBE), 5'-(T/A)NN(C/T)(T/C/G)TNNNNNNNA(A/C)GN(A/C/T)(A/T)-3', in the promoter of target genes. Involved in xylem formation by promoting the expression of secondary wall-associated transcription factors and of genes involved in secondary wall biosynthesis and programmed cell death, genes driven by the secondary wall NAC binding element (SNBE). Triggers thickening of secondary walls. The polypeptide is NAC domain-containing protein 7 (Arabidopsis thaliana (Mouse-ear cress)).